The sequence spans 97 residues: Ataxin-7-like protein 3B (97 aa).

A disordered region spans residues 76 to 97 (SLPGDPGDGPQTELQRSPPEFQ). S92 carries the phosphoserine modification.

Belongs to the SGF11 family. As to quaternary structure, interacts strongly with ENY2. Interacts weakly with USP22.

Its subcellular location is the cytoplasm. Functionally, by binding to ENY2, interferes with the nuclear functions of the deubiquitinase (DUB) module of the SAGA complex which consists of ENY2, ATXN7, ATXN7L3 and the histone deubiquitinating component USP22. Affects USP22 DUB activity toward histones indirectly by changing the subcellular distribution of ENY2 and altering ENY2 availability for ATXN7L3 interaction. Regulates H2B monoubiquitination (H2Bub1) levels through cytoplasmic sequestration of ENY2 resulting in loss of nuclear ENY2-ATXN7L3 association which destabilizes ATXN7L3. Affects protein expression levels of ENY2 and ATXN7L3. This chain is Ataxin-7-like protein 3B (Atxn7l3b), found in Mus musculus (Mouse).